Reading from the N-terminus, the 366-residue chain is 3-dehydroquinate synthase (366 aa).

NAD(+) is bound by residues 74-79, 108-112, 132-133, K144, K153, and 171-174; these read SGEAAK, GVVGD, TT, and FLRT. The Zn(2+) site is built by E186, H249, and H266.

Belongs to the sugar phosphate cyclases superfamily. Dehydroquinate synthase family. The cofactor is Co(2+). Zn(2+) is required as a cofactor. Requires NAD(+) as cofactor.

It localises to the cytoplasm. It catalyses the reaction 7-phospho-2-dehydro-3-deoxy-D-arabino-heptonate = 3-dehydroquinate + phosphate. Its pathway is metabolic intermediate biosynthesis; chorismate biosynthesis; chorismate from D-erythrose 4-phosphate and phosphoenolpyruvate: step 2/7. In terms of biological role, catalyzes the conversion of 3-deoxy-D-arabino-heptulosonate 7-phosphate (DAHP) to dehydroquinate (DHQ). The sequence is that of 3-dehydroquinate synthase from Geobacillus thermodenitrificans (strain NG80-2).